Reading from the N-terminus, the 166-residue chain is Cyclin-dependent kinase 4 inhibitor D (166 aa).

Met-1 is subject to N-acetylmethionine. ANK repeat units lie at residues 41–69 (FGKT…SPNV), 73–102 (SGTS…DVNV), 106–135 (TGAL…LHRR), and 138–166 (RGLT…VAPL).

This sequence belongs to the CDKN2 cyclin-dependent kinase inhibitor family. Interacts with CDK6.

Its subcellular location is the nucleus. It localises to the cytoplasm. Interacts strongly with CDK4 and CDK6 and inhibits them. The polypeptide is Cyclin-dependent kinase 4 inhibitor D (CDKN2D) (Homo sapiens (Human)).